Reading from the N-terminus, the 78-residue chain is Major outer membrane lipoprotein Lpp (78 aa).

The first 19 residues, 1-19 (MKAKIVLGAVILASGLLAG), serve as a signal peptide directing secretion. Cys20 carries N-palmitoyl cysteine lipidation. Cys20 carries S-diacylglycerol cysteine lipidation. Repeats lie at residues 25–35 (NAQLDQISSDV) and 39–49 (NTQVQQLSSDV). Residues 28 to 62 (LDQISSDVNRLNTQVQQLSSDVQSANAQAKAAYEA) adopt a coiled-coil conformation. Lys78 carries the N6-murein peptidoglycan lysine modification.

Belongs to the Lpp family. In terms of assembly, homotrimer.

The protein resides in the cell outer membrane. It localises to the secreted. Its subcellular location is the cell wall. Its function is as follows. A highly abundant outer membrane lipoprotein that controls the distance between the inner and outer membranes. The only protein known to be covalently linked to the peptidoglycan network (PGN). Also non-covalently binds the PGN. The link between the cell outer membrane and PGN contributes to maintenance of the structural and functional integrity of the cell envelope, and maintains the correct distance between the PGN and the outer membrane. This chain is Major outer membrane lipoprotein Lpp, found in Proteus mirabilis.